The chain runs to 339 residues: Heat-inducible transcription repressor HrcA (339 aa).

It belongs to the HrcA family.

Negative regulator of class I heat shock genes (grpE-dnaK-dnaJ and groELS operons). Prevents heat-shock induction of these operons. The sequence is that of Heat-inducible transcription repressor HrcA from Parafrankia sp. (strain EAN1pec).